Reading from the N-terminus, the 247-residue chain is (7aS)-7a-methyl-1,5-dioxo-2,3,5,6,7,7a-hexahydro-1H-indene-carboxyl-CoA hydrolase (247 aa).

It belongs to the enoyl-CoA hydratase/isomerase family.

The enzyme catalyses (7aS)-7a-methyl-1,5-dioxo-2,3,5,6,7,7a-hexahydro-1H-indene-carboxyl-CoA + H2O = (3E)-2-(2-carboxylatoethyl)-3-methyl-6-oxocyclohex-1-ene-1-carboxyl-CoA + H(+). The protein operates within steroid metabolism; cholesterol degradation. Functionally, involved in the final steps of cholesterol and steroid degradation. Catalyzes the hydrolytic ring D opening of (7aS)-7a-methyl-1,5-dioxo-2,3,5,6,7,7a-hexahydro-1H-indene-carboxyl-CoA (HIEC-CoA) to (3E)-2-(2-carboxylatoethyl)-3-methyl-6-oxocyclohex-1-ene-1-carboxyl-CoA (COCHEA-CoA). In Mycobacterium tuberculosis (strain ATCC 25618 / H37Rv), this protein is (7aS)-7a-methyl-1,5-dioxo-2,3,5,6,7,7a-hexahydro-1H-indene-carboxyl-CoA hydrolase.